The primary structure comprises 263 residues: Proliferating cell nuclear antigen (263 aa).

A DNA-binding region spans residues 61–80 (RCDRNLSMGMNLNNMAKMLR).

The protein belongs to the PCNA family. Homotrimer. Interacts with FEN1A. Interacts with POLL. Interacts with RAD/GEN1. Interacts with DJA7 and DJA8. Expressed in proliferating tissues. Expressed in roots and root apex. Expressed at low levels in young leaves. Not detected in mature leaves. Highly expressed in shoot apical meristem (SAM). Expressed in flag leaves and panicles.

The protein localises to the nucleus. This protein is an auxiliary protein of DNA polymerase delta and is involved in the control of eukaryotic DNA replication by increasing the polymerase's processibility during elongation of the leading strand. The chain is Proliferating cell nuclear antigen from Oryza sativa subsp. japonica (Rice).